Consider the following 487-residue polypeptide: Glutamate--tRNA ligase 2 (487 aa).

Positions 24-34 (PSPTGFLHIGG) match the 'HIGH' region motif. Positions 258–262 (KLSKR) match the 'KMSKS' region motif. Lysine 261 serves as a coordination point for ATP.

The protein belongs to the class-I aminoacyl-tRNA synthetase family. Glutamate--tRNA ligase type 1 subfamily. Monomer.

It localises to the cytoplasm. The catalysed reaction is tRNA(Glu) + L-glutamate + ATP = L-glutamyl-tRNA(Glu) + AMP + diphosphate. In terms of biological role, catalyzes the attachment of glutamate to tRNA(Glu) in a two-step reaction: glutamate is first activated by ATP to form Glu-AMP and then transferred to the acceptor end of tRNA(Glu). The protein is Glutamate--tRNA ligase 2 of Novosphingobium aromaticivorans (strain ATCC 700278 / DSM 12444 / CCUG 56034 / CIP 105152 / NBRC 16084 / F199).